The primary structure comprises 141 residues: Large ribosomal subunit protein uL11 (141 aa).

The protein belongs to the universal ribosomal protein uL11 family. As to quaternary structure, part of the ribosomal stalk of the 50S ribosomal subunit. Interacts with L10 and the large rRNA to form the base of the stalk. L10 forms an elongated spine to which L12 dimers bind in a sequential fashion forming a multimeric L10(L12)X complex. In terms of processing, one or more lysine residues are methylated.

Functionally, forms part of the ribosomal stalk which helps the ribosome interact with GTP-bound translation factors. This Streptococcus pyogenes serotype M1 protein is Large ribosomal subunit protein uL11.